The following is a 226-amino-acid chain: Phospholipase Culp4 (226 aa).

An N-terminal signal peptide occupies residues 1–45 (MIPRPQPHSGRWRAGAARRLTSLVAAAFAAATLLLTPALAPPASA). Cysteines 47 and 117 form a disulfide. The Nucleophile role is filled by Ser128. A disulfide bridge connects residues Cys191 and Cys198. The active site involves Asp195. His207 serves as the catalytic Proton donor/acceptor.

Belongs to the cutinase family. In terms of assembly, homodimer.

The protein resides in the cell membrane. It localises to the secreted. Its subcellular location is the cell wall. The catalysed reaction is 1,2-dihexadecanoyl-sn-glycero-3-phosphocholine + H2O = 1-hexadecanoyl-sn-glycero-3-phosphocholine + hexadecanoate + H(+). The enzyme catalyses a butanoate ester + H2O = an aliphatic alcohol + butanoate + H(+). Its activity is regulated as follows. Inhibited by high concentrations of paraoxon. Inhibited by tetrahydrolipstatin (THL), a specific lipase inhibitor. Its function is as follows. A2-type phospholipase, which is probably involved in the degradation of macrophage membrane. Hydrolyzes dipalmitoylphosphatidylcholine. Also shows moderate esterase activity and hydrolyzes the p-nitrophenol-linked aliphatic ester pNP-butyrate (C4). Does not exhibit cutinase activity. In Mycobacterium tuberculosis (strain ATCC 25618 / H37Rv), this protein is Phospholipase Culp4.